Consider the following 200-residue polypeptide: Protein Rv0461 (200 aa).

A disordered region spans residues 47–67 (DRAGKSWPGSTPKPQEDPVGV). 3 helical membrane passes run 102–122 (FVLV…SLFY), 134–154 (VFVV…LALV), and 159–179 (LITA…AAAA).

Its subcellular location is the cell membrane. In Mycobacterium tuberculosis (strain ATCC 25618 / H37Rv), this protein is Protein Rv0461.